The following is a 462-amino-acid chain: Glutamate--tRNA ligase 1 (462 aa).

Positions 8 to 18 (PSPTGYLHIGG) match the 'HIGH' region motif. The 'KMSKS' region signature appears at 237–241 (KLSKR). Lysine 240 lines the ATP pocket.

It belongs to the class-I aminoacyl-tRNA synthetase family. Glutamate--tRNA ligase type 1 subfamily. Monomer.

Its subcellular location is the cytoplasm. It catalyses the reaction tRNA(Glu) + L-glutamate + ATP = L-glutamyl-tRNA(Glu) + AMP + diphosphate. Catalyzes the attachment of glutamate to tRNA(Glu) in a two-step reaction: glutamate is first activated by ATP to form Glu-AMP and then transferred to the acceptor end of tRNA(Glu). This is Glutamate--tRNA ligase 1 from Campylobacter hominis (strain ATCC BAA-381 / DSM 21671 / CCUG 45161 / LMG 19568 / NCTC 13146 / CH001A).